A 165-amino-acid polypeptide reads, in one-letter code: (2E)-enoyl-[ACP] glycyltransferase (165 aa).

The protein belongs to the FcoT family.

It carries out the reaction a (3R)-3-[(carboxymethyl)amino]fatty acid + holo-[ACP] + H(+) = a (2E)-enoyl-[ACP] + glycine + H2O. The enzyme catalyses (3R)-3-[(carboxymethyl)amino]butanoate + holo-[ACP] + H(+) = (2E)-butenoyl-[ACP] + glycine + H2O. Its function is as follows. Involved in the biosynthesis of a unique class of isonitrile lipopeptides (INLPs). Catalyzes a Michael addition of glycine to the beta-position of an alpha,beta-unsaturated fatty acyl-[ACP], producing a (3R)-3-[(carboxymethyl)amino]fatty acid. Acts on the (2E)-butenoyl moiety loaded on the acyl-carrier protein ScoB, forming the product (3R)-3-[(carboxymethyl)amino]butanoate released from ScoB. This chain is (2E)-enoyl-[ACP] glycyltransferase, found in Streptomyces coeruleorubidus.